We begin with the raw amino-acid sequence, 185 residues long: MLQAIYNETKDLMQKSIQALNRDFSTLRSAKVSVNILDHIKVDYYGTPTTLNQVGSVMSLDATTLQISPWEKNLLKEIERSIQEANIGVNPNNDGETIKLFFPPMTTEQRKLIAKDAKAMGEKAKVAVRNIRQDANNKIKKLEKDKEISEDESKKAQEQIQKITDEAIKTIDESVKNKEDAILKV.

The protein belongs to the RRF family.

Its subcellular location is the cytoplasm. Functionally, responsible for the release of ribosomes from messenger RNA at the termination of protein biosynthesis. May increase the efficiency of translation by recycling ribosomes from one round of translation to another. The protein is Ribosome-recycling factor of Helicobacter pylori (strain Shi470).